Consider the following 465-residue polypeptide: Sensor histidine kinase ZraS (465 aa).

At 1–14 (MRFMQRSKDSLAKW) the chain is on the cytoplasmic side. A helical transmembrane segment spans residues 15 to 35 (LSAILPVVIVGLVGLFAVTVI). Residues 36–201 (RDYGRASEAD…ATQSGEKRNT (166 aa)) lie on the Periplasmic side of the membrane. The chain crosses the membrane as a helical span at residues 202-222 (LIILFALATVLLASVLSFFWY). Topologically, residues 223–465 (RRYLRSRQLL…VNITRKDPQG (243 aa)) are cytoplasmic. A Histidine kinase domain is found at 251–458 (GVAHEIRNPL…TFTLWLPVNI (208 aa)). Phosphohistidine; by autocatalysis is present on His-254.

Post-translationally, autophosphorylated.

The protein localises to the cell inner membrane. It carries out the reaction ATP + protein L-histidine = ADP + protein N-phospho-L-histidine.. Its activity is regulated as follows. Activity of the ZraS/ZraR two-component system is repressed by the zinc-bound form of ZraP, which probably interacts with the periplasmic region of ZraS. In terms of biological role, part of the Zra signaling pathway, an envelope stress response (ESR) system composed of the periplasmic accessory protein ZraP, the histidine kinase ZraS and the transcriptional regulator ZraR. The ZraPSR system contributes to antibiotic resistance and is important for membrane integrity in the presence of membrane-targeting biocides. ZraS is a member of the two-component regulatory system ZraS/ZraR. Functions as a membrane-associated sensor kinase that phosphorylates ZraR in response to high concentrations of Zn(2+) or Pb(2+) in the medium. Binds one zinc molecule with high affinity via its periplasmic domain, inducing a conformational change that is transmitted to the histidine kinase domain and leads to the activation of ZraR. The system has no direct role in zinc or copper resistance. This Escherichia coli (strain K12) protein is Sensor histidine kinase ZraS.